We begin with the raw amino-acid sequence, 426 residues long: Serine--tRNA ligase (426 aa).

An L-serine-binding site is contributed by 233 to 235 (TAE). ATP is bound at residue 264 to 266 (RRE). Residue Glu287 participates in L-serine binding. 351–354 (EISS) lines the ATP pocket. L-serine is bound at residue Ser386.

Belongs to the class-II aminoacyl-tRNA synthetase family. Type-1 seryl-tRNA synthetase subfamily. In terms of assembly, homodimer. The tRNA molecule binds across the dimer.

Its subcellular location is the cytoplasm. The enzyme catalyses tRNA(Ser) + L-serine + ATP = L-seryl-tRNA(Ser) + AMP + diphosphate + H(+). The catalysed reaction is tRNA(Sec) + L-serine + ATP = L-seryl-tRNA(Sec) + AMP + diphosphate + H(+). The protein operates within aminoacyl-tRNA biosynthesis; selenocysteinyl-tRNA(Sec) biosynthesis; L-seryl-tRNA(Sec) from L-serine and tRNA(Sec): step 1/1. Functionally, catalyzes the attachment of serine to tRNA(Ser). Is also able to aminoacylate tRNA(Sec) with serine, to form the misacylated tRNA L-seryl-tRNA(Sec), which will be further converted into selenocysteinyl-tRNA(Sec). The polypeptide is Serine--tRNA ligase (Prochlorococcus marinus (strain NATL1A)).